A 226-amino-acid polypeptide reads, in one-letter code: 7-carboxy-7-deazaguanine synthase (226 aa).

Residues 10–12 and Arg-25 contribute to the substrate site; that span reads LQG. Residues 16–221 enclose the Radical SAM core domain; it reads YTGIPCIFVR…LQTHKFIWTP (206 aa). [4Fe-4S] cluster-binding residues include Cys-29, Cys-33, and Cys-36. Ser-38 lines the Mg(2+) pocket. Substrate is bound at residue Thr-69. Residue Gly-71 coordinates S-adenosyl-L-methionine.

It belongs to the radical SAM superfamily. 7-carboxy-7-deazaguanine synthase family. As to quaternary structure, homodimer. [4Fe-4S] cluster serves as cofactor. S-adenosyl-L-methionine is required as a cofactor. Requires Mg(2+) as cofactor.

It carries out the reaction 6-carboxy-5,6,7,8-tetrahydropterin + H(+) = 7-carboxy-7-deazaguanine + NH4(+). It participates in purine metabolism; 7-cyano-7-deazaguanine biosynthesis. Its function is as follows. Catalyzes the complex heterocyclic radical-mediated conversion of 6-carboxy-5,6,7,8-tetrahydropterin (CPH4) to 7-carboxy-7-deazaguanine (CDG), a step common to the biosynthetic pathways of all 7-deazapurine-containing compounds. This Koribacter versatilis (strain Ellin345) protein is 7-carboxy-7-deazaguanine synthase.